We begin with the raw amino-acid sequence, 96 residues long: Ribonuclease P protein component 1 (96 aa).

It belongs to the eukaryotic/archaeal RNase P protein component 1 family. Consists of a catalytic RNA component and at least 4-5 protein subunits.

It is found in the cytoplasm. The catalysed reaction is Endonucleolytic cleavage of RNA, removing 5'-extranucleotides from tRNA precursor.. Its function is as follows. Part of ribonuclease P, a protein complex that generates mature tRNA molecules by cleaving their 5'-ends. The chain is Ribonuclease P protein component 1 from Methanococcus aeolicus (strain ATCC BAA-1280 / DSM 17508 / OCM 812 / Nankai-3).